A 1150-amino-acid chain; its full sequence is MAPPLRPLARLRPPGMLLRALLLLLLLSPLPGVWCFSELSFVKEPQDVTVTRKDPVVLDCQAHGEVPIKVTWLKNGAKMSENKRIEVLSNGSLYISEVEGRRGEQSDEGFYQCLAMNKYGAILSQKAHLALSTISAFEVQPISTEVHEGGVARFACKISSHPPAVITWEFNRTTLPMTMDRITALPTGVLQIYDVSQRDSGNYRCIAATVAHRRKSMEASLTVIPAKESKSFHTPTIIAGPQNITTSLHQTVVLECMATGNPKPIISWSRLDHKSIDVFNTRVLGNGNLMISDVRLQHAGVYVCRATTPGTRNFTVAMATLTVLAPPSFVEWPESLTRPRAGTARFVCQAEGIPSPKMSWLKNGRKIHSNGRIKMYNSKLVINQIIPEDDAIYQCMAENSQGSILSRARLTVVMSEDRPSAPYNVHAETMSSSAILLAWERPLYNSDKVIAYSVHYMKAEGLNNEEYQVVIGNDTTHYIIDDLEPASNYTFYIVAYMPMGASQMSDHVTQNTLEDVPLRPPEISLTSRSPTDILISWLPIPAKYRRGQVVLYRLSFRLSTENSIQVLELPGTTHEYLLEGLKPDSVYLVRITAATRVGLGESSVWTSHRTPKATSVKAPKSPELHLEPLNCTTISVRWQQDVEDTAAIQGYKLYYKEEGQQENGPIFLDTKDLLYTLSGLDPRRKYHVRLLAYNNIDDGYQADQTVSTPGCVSVRDRMVPPPPPPHHLYAKANTSSSIFLHWRRPAFTAAQIINYTIRCNPVGLQNASLVLYLQTSETHMLVQGLEPNTKYEFAVRLHVDQLSSPWSPVVYHSTLPEAPAGPPVGVKVTLIEDDTALVSWKPPDGPETVVTRYTILYASRKAWIAGEWQVLHREGAITMALLENLVAGNVYIVKISASNEVGEGPFSNSVELAVLPKETSESNQRPKRLDSADAKVYSGYYHLDQKSMTGIAVGVGIALTCILICVLILIYRSKARKSSASKTAQNGTQQLPRTSASLASGNEVGKNLEGAVGNEESLMPMIMPNSFIDAKGGTDLIINSYGPIIKNNSKKKWFFFQDSKKIQVEQPQRRFTPAVCFYQPGTTVLISDEDSPSSPGQTTSFSRPFGVAADTEHSANSEGSHETGDSGRFSHESNDEIHLSSVISTTPPNL.

The signal sequence occupies residues 1–35 (MAPPLRPLARLRPPGMLLRALLLLLLLSPLPGVWC). Ig-like domains follow at residues 36–130 (FSEL…AHLA), 135–222 (SAFE…ASLT), 235–322 (PTII…ATLT), and 327–411 (PSFV…ARLT). The Extracellular portion of the chain corresponds to 36–949 (FSELSFVKEP…YYHLDQKSMT (914 aa)). 4 disulfides stabilise this stretch: C60–C113, C156–C205, C256–C304, and C348–C395. Residue N90 is glycosylated (N-linked (GlcNAc...) asparagine). Fibronectin type-III domains follow at residues 421 to 515 (APYN…TLED), 517 to 613 (PLRP…TPKA), 618 to 717 (APKS…VRDR), 724 to 817 (PPHH…TLPE), and 822 to 917 (PPVG…VLPK). N-linked (GlcNAc...) asparagine glycosylation is present at N488. The N-linked (GlcNAc...) asparagine glycan is linked to N630. A helical membrane pass occupies residues 950–970 (GIAVGVGIALTCILICVLILI). Topologically, residues 971-1150 (YRSKARKSSA…SVISTTPPNL (180 aa)) are cytoplasmic. 2 disordered regions span residues 981 to 1002 (SKTA…ASGN) and 1086 to 1150 (ISDE…PPNL). 2 stretches are compositionally biased toward polar residues: residues 983–1000 (TAQN…SLAS) and 1092–1102 (PSSPGQTTSFS). Residues 1110-1138 (DTEHSANSEGSHETGDSGRFSHESNDEIH) are compositionally biased toward basic and acidic residues. Over residues 1141–1150 (SVISTTPPNL) the composition is skewed to polar residues.

This sequence belongs to the immunoglobulin superfamily. DCC family.

It is found in the membrane. Functionally, may play a role in anteroposterior axis elongation. This is Protogenin from Homo sapiens (Human).